We begin with the raw amino-acid sequence, 397 residues long: MEIVGCRAENNSCPFRPPAMLFHGISGGHIQGIMEEMERRSKTEARLTKGTQLNGRDAGMPPLSPEKPALCAGCGGKISDRYYLLAVDKQWHLRCLKCCECKLALESELTCFAKDGSIYCKEDYYRRFSVQRCARCHLGISASEMVMRARDSVYHLSCFTCSTCNKTLTTGDHFGMKDSLVYCRAHFETLLQGEYPPQLSYTELAAKSGGLALPYFNGTGTVQKGRPRKRKSPALGVDIVNYNSGCNENEADHLDRDQQPYPPSQKTKRMRTSFKHHQLRTMKSYFAINHNPDAKDLKQLAQKTGLTKRVLQVWFQNARAKFRRNLLRQENGGVDKADGTSLPAPPSADSGALTPPGTATTLTDLTNPTVTVVTTVTSNMDSHEPGSPSQTTLTNLF.

LIM zinc-binding domains lie at 69 to 130 (ALCA…RFSV) and 131 to 193 (QRCA…LLQG). 3 disordered regions span residues 248 to 272 (ENEA…RMRT), 330 to 365 (ENGG…LTDL), and 378 to 397 (SNMD…TNLF). Residues 267 to 326 (TKRMRTSFKHHQLRTMKSYFAINHNPDAKDLKQLAQKTGLTKRVLQVWFQNARAKFRRNL) constitute a DNA-binding region (homeobox). A compositionally biased stretch (low complexity) spans 353-365 (LTPPGTATTLTDL). A compositionally biased stretch (polar residues) spans 387 to 397 (SPSQTTLTNLF).

As to quaternary structure, interacts with LDB1 and LDB2. Expressed in the dorsal thalamus and inner nuclei of the cerebellum.

It localises to the nucleus. In terms of biological role, involved in gonadal development. This is LIM/homeobox protein Lhx9 (Lhx9) from Mus musculus (Mouse).